We begin with the raw amino-acid sequence, 205 residues long: 3-isopropylmalate dehydratase small subunit (205 aa).

The protein belongs to the LeuD family. LeuD type 1 subfamily. As to quaternary structure, heterodimer of LeuC and LeuD.

It catalyses the reaction (2R,3S)-3-isopropylmalate = (2S)-2-isopropylmalate. Its pathway is amino-acid biosynthesis; L-leucine biosynthesis; L-leucine from 3-methyl-2-oxobutanoate: step 2/4. Functionally, catalyzes the isomerization between 2-isopropylmalate and 3-isopropylmalate, via the formation of 2-isopropylmaleate. The chain is 3-isopropylmalate dehydratase small subunit from Christiangramia forsetii (strain DSM 17595 / CGMCC 1.15422 / KT0803) (Gramella forsetii).